The chain runs to 1647 residues: Transcription elongation factor SPT6 homolog (1647 aa).

The interval Met-1–Ser-209 is disordered. A compositionally biased stretch (acidic residues) spans Ser-7–Gly-20. The segment covering Glu-21–His-30 has biased composition (basic and acidic residues). Residues Asp-31 to Glu-67 show a composition bias toward acidic residues. A compositionally biased stretch (basic residues) spans Lys-103 to Lys-114. Residues Asp-132–Asp-151 are compositionally biased toward basic and acidic residues. The span at Asp-152–Glu-191 shows a compositional bias: acidic residues. An S1 motif domain is found at Gly-1103–Lys-1174. Residues Pro-1429 to Trp-1647 form a disordered region. Tandem repeats lie at residues Gly-1443–Trp-1444 and Gly-1452–Trp-1453. The interval Gly-1443–Trp-1647 is 12 X 2 AA repeats of [WG]-[GW] repeats. The segment covering Ser-1462–Gly-1471 has biased composition (gly residues). The segment covering Arg-1496–Gly-1507 has biased composition (basic and acidic residues). Repeat copies occupy residues Trp-1511–Gly-1512, Gly-1522–Trp-1523, Gly-1530–Trp-1531, Gly-1547–Trp-1548, Trp-1563–Gly-1564, and Gly-1574–Trp-1575. 4 stretches are compositionally biased toward gly residues: residues Ala-1519 to Gly-1532, Lys-1539 to Ser-1552, Gly-1561 to Ser-1579, and Gly-1588 to Asp-1600. Repeat copies occupy residues Trp-1601–Gly-1602, Gly-1615–Trp-1616, Gly-1630–Trp-1631, and Gly-1646–Trp-1647.

The protein belongs to the SPT6 family. In terms of assembly, interacts (via N-terminus) with IWS1. In terms of tissue distribution, expressed in shoot apical meristem, leaf primordia, vasculature of young leaves, inflorescence meristem, floral meristem, young floral organs, developing ovules and anthers.

The protein localises to the nucleus. Its function is as follows. Transcription elongation factor that enhances the transcription elongation by RNA polymerase II (RNAPII). Plays an important role in regulating embryo apical and basal patterning during early embryogenesis, partly through negative regulation of the transcription factors PHABULOSA and PHAVOLUTA. The chain is Transcription elongation factor SPT6 homolog from Arabidopsis thaliana (Mouse-ear cress).